The primary structure comprises 180 residues: Ribulose bisphosphate carboxylase small subunit, chloroplastic 4 (180 aa).

A chloroplast-targeting transit peptide spans 1–56; it reads MASSIVSSAAVATRANGAQASMVGPFTGLKSTASFPVSRKQNLDITSIASNGGRVR.

This sequence belongs to the RuBisCO small chain family. As to quaternary structure, heterohexadecamer of 8 large and 8 small subunits.

It localises to the plastid. Its subcellular location is the chloroplast. In terms of biological role, ruBisCO catalyzes two reactions: the carboxylation of D-ribulose 1,5-bisphosphate, the primary event in carbon dioxide fixation, as well as the oxidative fragmentation of the pentose substrate. Both reactions occur simultaneously and in competition at the same active site. Although the small subunit is not catalytic it is essential for maximal activity. The sequence is that of Ribulose bisphosphate carboxylase small subunit, chloroplastic 4 from Solanum tuberosum (Potato).